A 474-amino-acid polypeptide reads, in one-letter code: 3-isopropylmalate dehydratase large subunit (474 aa).

Residues C353, C414, and C417 each contribute to the [4Fe-4S] cluster site.

Belongs to the aconitase/IPM isomerase family. LeuC type 1 subfamily. In terms of assembly, heterodimer of LeuC and LeuD. Requires [4Fe-4S] cluster as cofactor.

It carries out the reaction (2R,3S)-3-isopropylmalate = (2S)-2-isopropylmalate. The protein operates within amino-acid biosynthesis; L-leucine biosynthesis; L-leucine from 3-methyl-2-oxobutanoate: step 2/4. Its function is as follows. Catalyzes the isomerization between 2-isopropylmalate and 3-isopropylmalate, via the formation of 2-isopropylmaleate. The chain is 3-isopropylmalate dehydratase large subunit from Pseudomonas aeruginosa (strain LESB58).